The chain runs to 175 residues: 2-oxo-4-hydroxy-4-carboxy-5-ureidoimidazoline decarboxylase (175 aa).

The Proton donor role is filled by His67. Substrate contacts are provided by residues Pro68, 84–88 (SQNEQ), and 119–123 (FVICA). A Microbody targeting signal motif is present at residues 173–175 (TKL).

The protein belongs to the OHCU decarboxylase family.

It is found in the peroxisome. It carries out the reaction 5-hydroxy-2-oxo-4-ureido-2,5-dihydro-1H-imidazole-5-carboxylate + H(+) = (S)-allantoin + CO2. The protein operates within purine metabolism; urate degradation; (S)-allantoin from urate: step 3/3. In terms of biological role, catalyzes the stereoselective decarboxylation of 2-oxo-4-hydroxy-4-carboxy-5-ureidoimidazoline (OHCU) to (S)-allantoin. The sequence is that of 2-oxo-4-hydroxy-4-carboxy-5-ureidoimidazoline decarboxylase (urad) from Xenopus laevis (African clawed frog).